A 199-amino-acid chain; its full sequence is NAD(P)H dehydrogenase (quinone) (199 aa).

One can recognise a Flavodoxin-like domain in the interval 4-190; the sequence is VLVLYYSTYG…DGARYQGRHV (187 aa). FMN is bound by residues 10–15 and 78–80; these read STYGHI and TRY. Residue Tyr12 participates in NAD(+) binding. Trp98 contacts substrate. FMN contacts are provided by residues 113-119 and His134; that span reads SSASQHG.

This sequence belongs to the WrbA family. It depends on FMN as a cofactor.

The enzyme catalyses a quinone + NADH + H(+) = a quinol + NAD(+). It catalyses the reaction a quinone + NADPH + H(+) = a quinol + NADP(+). This chain is NAD(P)H dehydrogenase (quinone), found in Methylobacterium sp. (strain 4-46).